A 512-amino-acid chain; its full sequence is ADP,ATP carrier protein 4 (512 aa).

12 helical membrane-spanning segments follow: residues 34-54, 71-91, 102-122, 157-177, 192-212, 231-251, 296-316, 330-350, 361-381, 390-410, 448-468, and 476-496; these read ISKFLFITLLMFCILFIQNLI, ISFLKFWGVMPSAFLITVMYV, IFYLIISIFLIFFALFAYVIF, FSLFYIIAELWPNVVFALLFW, FYPLFGLLSQTGIYLAGHFLE, FHTLSIQIILTIVLILGIVSI, LIATLLICYGIAINLVEGPWK, AAFIGSYLSYTGVFTIFFVLL, FTSAVITPSIVFITGILFFAF, LIIANFILTDPALVAITIGAI, VIGTKLGKSGSAFLQSLIFII, and SISICLMIIFILTCLTWIWAT.

This sequence belongs to the ADP/ATP translocase tlc family.

Its subcellular location is the cell membrane. Functionally, provides the rickettsial cell with host ATP in exchange for rickettsial ADP. This is an obligate exchange system. This energy acquiring activity is an important component of rickettsial parasitism. This chain is ADP,ATP carrier protein 4 (tlcD), found in Rickettsia typhi (strain ATCC VR-144 / Wilmington).